The sequence spans 390 residues: MDTFLFTSESVNEGHPDKLCDQVSDAILDACLKQDPESKVACESCTKTNMVMVFGEITTKAQVNYEKIVRDTCRGIGFTSPDVGLDADHCKVLVNIEQQSPDIAQGVHGHLTKKPEEIGAGDQGHMFGYATDETPELMPLTHVLATKLGAKLTEVRKNSTCPWLRPDGKTQVTVEYRNEGGAMVPIRVHTVLISTQHDETVTNDQIANDLKKHVIKPVVPAQYLDDNTIFHLNPSGRFVIGGPHGDAGLTGRKIIIDTYGGWGAHGGGAFSGKDPTKVDRSGAYIVRQAAKSVVASGLARRCLVQVSYAIGVAEPLSVFVDTYKTGKIADKDILALIKENFDFRPGMIAINLDLKRGGNLRYQKTAAYGHFGRDDPDFTWETVKILKPKA.

A Mg(2+)-binding site is contributed by Glu9. His15 serves as a coordination point for ATP. Glu43 is a binding site for K(+). Positions 56 and 99 each coordinate L-methionine. ATP is bound by residues 167–169 (DGK), 235–238 (SGRF), Asp246, 252–253 (RK), Ala269, Lys273, and Lys277. Asp246 contributes to the L-methionine binding site. Residue Lys277 coordinates L-methionine.

The protein belongs to the AdoMet synthase family. As to quaternary structure, homotetramer. The cofactor is Mn(2+). Mg(2+) is required as a cofactor. It depends on Co(2+) as a cofactor. K(+) serves as cofactor.

Its subcellular location is the cytoplasm. It catalyses the reaction L-methionine + ATP + H2O = S-adenosyl-L-methionine + phosphate + diphosphate. It functions in the pathway amino-acid biosynthesis; S-adenosyl-L-methionine biosynthesis; S-adenosyl-L-methionine from L-methionine: step 1/1. Catalyzes the formation of S-adenosylmethionine from methionine and ATP. The reaction comprises two steps that are both catalyzed by the same enzyme: formation of S-adenosylmethionine (AdoMet) and triphosphate, and subsequent hydrolysis of the triphosphate. The protein is S-adenosylmethionine synthase 1 (SAM1) of Actinidia chinensis var. chinensis (Chinese soft-hair kiwi).